The primary structure comprises 339 residues: MNIGIVNDLPLAVEALRRVLALRTDHRVLWVATDGDEAVDFCVAHPPDLVLMDLVMPKVDGVAATRRIMARAPCAILVVTASVSANTSSVYEAMGAGALDAVDTPTLALGLSTDASPQALLAKIDQIGRLLESRTAALVPPGPAPERGQPTLVAIGASAGGPTALTALLRALPADFPAAIVIVQHVDQAFALGMAEWLDGYTRLPVRVARQGSVPQPGEVLLAATNDHLYLSPRGVLGYTRHPVETPYRPSIDVFFNSVADGWQGEAFGVLLTGMGRDGALGLKAMRAKGCYTIAQDEATSAVYGMPKAAAAIGAASAILPLERIAPQLISRITRPLRD.

The Response regulatory domain maps to 2 to 119; the sequence is NIGIVNDLPL…GLSTDASPQA (118 aa). Position 53 is a 4-aspartylphosphate (Asp-53). The 196-residue stretch at 141–336 folds into the CheB-type methylesterase domain; that stretch reads PGPAPERGQP…PQLISRITRP (196 aa). Active-site residues include Ser-158, His-185, and Asp-278.

Belongs to the CheB family. Phosphorylated by CheA. Phosphorylation of the N-terminal regulatory domain activates the methylesterase activity.

The protein resides in the cytoplasm. It catalyses the reaction [protein]-L-glutamate 5-O-methyl ester + H2O = L-glutamyl-[protein] + methanol + H(+). It carries out the reaction L-glutaminyl-[protein] + H2O = L-glutamyl-[protein] + NH4(+). Functionally, involved in chemotaxis. Part of a chemotaxis signal transduction system that modulates chemotaxis in response to various stimuli. Catalyzes the demethylation of specific methylglutamate residues introduced into the chemoreceptors (methyl-accepting chemotaxis proteins or MCP) by CheR. Also mediates the irreversible deamidation of specific glutamine residues to glutamic acid. This Burkholderia lata (strain ATCC 17760 / DSM 23089 / LMG 22485 / NCIMB 9086 / R18194 / 383) protein is Protein-glutamate methylesterase/protein-glutamine glutaminase 2.